The sequence spans 153 residues: 4'-phosphopantetheinyl transferase B, mitochondrial (153 aa).

The protein belongs to the P-Pant transferase superfamily.

It localises to the mitochondrion. The catalysed reaction is apo-[ACP] + CoA = holo-[ACP] + adenosine 3',5'-bisphosphate + H(+). Its function is as follows. Acyl-carrier-protein synthase transfers the 4'-phosphopantetheine moiety from coenzyme A to a Ser of an acyl-carrier-protein. The 4'-phosphopantetheine (4'-PPT) portion of CoA provides the essential prosthetic group for a number of carrier proteins and multi-domain enzymes, priming them for the acceptance of acyl building blocks in fatty acid synthesis and many aspects of secondary metabolism mediated by polyketide synthases (PKSs) and non-ribosomal peptide synthetases (NRPSs). PptB is specific for the mitochondrial acyl carrier protein acpA. The chain is 4'-phosphopantetheinyl transferase B, mitochondrial from Aspergillus fumigatus (strain ATCC MYA-4609 / CBS 101355 / FGSC A1100 / Af293) (Neosartorya fumigata).